We begin with the raw amino-acid sequence, 455 residues long: Bifunctional protein GlmU (455 aa).

The pyrophosphorylase stretch occupies residues 1 to 228; it reads MYKCALVLAA…YEETIGVNSR (228 aa). UDP-N-acetyl-alpha-D-glucosamine is bound by residues 8 to 11, Lys-22, Gln-73, and 78 to 79; these read LAAG and GT. Asp-103 is a Mg(2+) binding site. The UDP-N-acetyl-alpha-D-glucosamine site is built by Gly-140, Glu-154, Asn-169, and Asn-226. A Mg(2+)-binding site is contributed by Asn-226. The interval 229–249 is linker; the sequence is VQLAEAEEILKNRINLMHMEN. The N-acetyltransferase stretch occupies residues 250–455; that stretch reads GVTLIDPRTT…GWVDKKGLKK (206 aa). Residues Arg-331 and Lys-349 each coordinate UDP-N-acetyl-alpha-D-glucosamine. His-361 serves as the catalytic Proton acceptor. Positions 364 and 375 each coordinate UDP-N-acetyl-alpha-D-glucosamine. Acetyl-CoA contacts are provided by residues 384 to 385, Ala-421, and Arg-438; that span reads NY.

It in the N-terminal section; belongs to the N-acetylglucosamine-1-phosphate uridyltransferase family. In the C-terminal section; belongs to the transferase hexapeptide repeat family. As to quaternary structure, homotrimer. The cofactor is Mg(2+).

It localises to the cytoplasm. It catalyses the reaction alpha-D-glucosamine 1-phosphate + acetyl-CoA = N-acetyl-alpha-D-glucosamine 1-phosphate + CoA + H(+). The catalysed reaction is N-acetyl-alpha-D-glucosamine 1-phosphate + UTP + H(+) = UDP-N-acetyl-alpha-D-glucosamine + diphosphate. It functions in the pathway nucleotide-sugar biosynthesis; UDP-N-acetyl-alpha-D-glucosamine biosynthesis; N-acetyl-alpha-D-glucosamine 1-phosphate from alpha-D-glucosamine 6-phosphate (route II): step 2/2. Its pathway is nucleotide-sugar biosynthesis; UDP-N-acetyl-alpha-D-glucosamine biosynthesis; UDP-N-acetyl-alpha-D-glucosamine from N-acetyl-alpha-D-glucosamine 1-phosphate: step 1/1. It participates in bacterial outer membrane biogenesis; LPS lipid A biosynthesis. Catalyzes the last two sequential reactions in the de novo biosynthetic pathway for UDP-N-acetylglucosamine (UDP-GlcNAc). The C-terminal domain catalyzes the transfer of acetyl group from acetyl coenzyme A to glucosamine-1-phosphate (GlcN-1-P) to produce N-acetylglucosamine-1-phosphate (GlcNAc-1-P), which is converted into UDP-GlcNAc by the transfer of uridine 5-monophosphate (from uridine 5-triphosphate), a reaction catalyzed by the N-terminal domain. The chain is Bifunctional protein GlmU from Clostridium beijerinckii (strain ATCC 51743 / NCIMB 8052) (Clostridium acetobutylicum).